Reading from the N-terminus, the 461-residue chain is Glycolipid 2-alpha-mannosyltransferase 2 (461 aa).

The Cytoplasmic portion of the chain corresponds to 1–12; it reads MKPSIFYSSRQP. Residues 13 to 35 form a helical; Signal-anchor for type II membrane protein membrane-spanning segment; the sequence is YLKYLAIILTTITIYVLTHSSYS. Residues 35–52 are compositionally biased toward polar residues; it reads SADPNINDVTTKPISETV. Residues 35–138 form a disordered region; that stretch reads SADPNINDVT…SSSKDPVKPE (104 aa). Over 36 to 461 the chain is Lumenal; the sequence is ADPNINDVTT…QKPKEWEKYQ (426 aa). 2 stretches are compositionally biased toward low complexity: residues 61 to 70 and 106 to 116; these read SSPEQQQQQP and PKSSSSSPQQQ. Over residues 117–126 the composition is skewed to basic and acidic residues; that stretch reads EKQDTKKESE. Catalysis depends on Glu-349, which acts as the Nucleophile.

Belongs to the glycosyltransferase 15 family.

It is found in the golgi apparatus membrane. Involved in O-glycosylation of cell wall and secreted proteins. Transfers an alpha-D-mannosyl residue from GDP-mannose into lipid-linked oligosaccharide, forming an alpha-(1-&gt;2)-D-mannosyl-D-mannose linkage. Mainly responsible for the addition of the third mannose residue in an O-linked mannose pentamer. Can also substitute for MNT1 by adding the second mannose residue. Important for adherence to host surfaces and for virulence. The protein is Glycolipid 2-alpha-mannosyltransferase 2 (MNT2) of Candida albicans (strain SC5314 / ATCC MYA-2876) (Yeast).